We begin with the raw amino-acid sequence, 225 residues long: Cardiotrophin-like cytokine factor 1 (225 aa).

An N-terminal signal peptide occupies residues 1–27 (MDLRAGDSWGMLACLCTVLWHLPAVPA). An N-linked (GlcNAc...) asparagine glycan is attached at Asn29.

It belongs to the IL-6 superfamily. As to quaternary structure, forms a heteromeric complex with cardiotrophin-like cytokine CRLF1/CLF-1; the CRLF1-CLCF1 complex is a ligand for the ciliary neurotrophic factor receptor/CNTFR. The CRLF1-CLCF1 heterodimer binds SORL1 (via N-terminal ectodomain); within this complex, the interaction is mediated predominantly by the CRLF1 moiety. The tripartite signaling complex formed by CRLF1, CLCF1 and CNTFR also binds SORL1.

It localises to the secreted. In complex with CRLF1, forms a heterodimeric neurotropic cytokine that plays a crucial role during neuronal development. Also stimulates B-cells. Binds to and activates the ILST/gp130 receptor. The sequence is that of Cardiotrophin-like cytokine factor 1 (Clcf1) from Mus musculus (Mouse).